Reading from the N-terminus, the 307-residue chain is Melanoma-associated antigen F1 (307 aa).

The segment at 1 to 55 is disordered; the sequence is MLQTPESRGLPVPQAEGEKDGGHDGETRAPTASQERPKEELGAGREEGAAEPALT. Basic and acidic residues-rich tracts occupy residues 16–27 and 35–48; these read EGEKDGGHDGET and ERPK…REEG. The MAGE domain occupies 76 to 277; it reads LNRTVAELVQ…HWPVQYREAL (202 aa).

As to quaternary structure, interacts (via MAGE domain) with RING-type zinc finger-containing E3 ubiquitin-protein ligases LNX1, TRIM27 and NSMCE1; the interaction is direct. Ubiquitous.

Enhances ubiquitin ligase activity of RING-type zinc finger-containing E3 ubiquitin ligases. Proposed to act through recruitment and/or stabilization of the E2 ubiquitin-conjugating enzyme at the E3:substrate complex. MAGEF1-NSMCE1 ubiquitin ligase complex promotes proteasomal degradation of MMS19, a key component of the cytosolic iron-sulfur protein assembly (CIA) machinery. Down-regulation of MMS19 impairs the activity of several DNA repair and metabolism enzymes such as ERCC2/XPD, FANCJ, RTEL1 and POLD1 that require iron-sulfur clusters as cofactors. May negatively regulate genome integrity by inhibiting homologous recombination-mediated double-strand break DNA repair. The polypeptide is Melanoma-associated antigen F1 (Homo sapiens (Human)).